A 123-amino-acid chain; its full sequence is Small ribosomal subunit protein uS13 (123 aa).

Positions Pro97–Lys123 are disordered.

It belongs to the universal ribosomal protein uS13 family. Part of the 30S ribosomal subunit. Forms a loose heterodimer with protein S19. Forms two bridges to the 50S subunit in the 70S ribosome.

Functionally, located at the top of the head of the 30S subunit, it contacts several helices of the 16S rRNA. In the 70S ribosome it contacts the 23S rRNA (bridge B1a) and protein L5 of the 50S subunit (bridge B1b), connecting the 2 subunits; these bridges are implicated in subunit movement. Contacts the tRNAs in the A and P-sites. This chain is Small ribosomal subunit protein uS13, found in Ehrlichia canis (strain Jake).